The primary structure comprises 468 residues: ATP synthase subunit beta (468 aa).

155–162 (GGAGVGKT) is an ATP binding site.

This sequence belongs to the ATPase alpha/beta chains family. In terms of assembly, F-type ATPases have 2 components, CF(1) - the catalytic core - and CF(0) - the membrane proton channel. CF(1) has five subunits: alpha(3), beta(3), gamma(1), delta(1), epsilon(1). CF(0) has three main subunits: a(1), b(2) and c(9-12). The alpha and beta chains form an alternating ring which encloses part of the gamma chain. CF(1) is attached to CF(0) by a central stalk formed by the gamma and epsilon chains, while a peripheral stalk is formed by the delta and b chains.

It is found in the cell membrane. It catalyses the reaction ATP + H2O + 4 H(+)(in) = ADP + phosphate + 5 H(+)(out). Produces ATP from ADP in the presence of a proton gradient across the membrane. The catalytic sites are hosted primarily by the beta subunits. The sequence is that of ATP synthase subunit beta from Streptococcus equi subsp. zooepidemicus (strain H70).